Consider the following 291-residue polypeptide: Lipoyl synthase (291 aa).

Residues Cys36, Cys41, Cys47, Cys62, Cys66, Cys69, and Ser275 each coordinate [4Fe-4S] cluster. One can recognise a Radical SAM core domain in the interval 48–264 (FSKKTATFLI…KEFAISIGFK (217 aa)).

Belongs to the radical SAM superfamily. Lipoyl synthase family. Requires [4Fe-4S] cluster as cofactor.

The protein resides in the cytoplasm. It catalyses the reaction [[Fe-S] cluster scaffold protein carrying a second [4Fe-4S](2+) cluster] + N(6)-octanoyl-L-lysyl-[protein] + 2 oxidized [2Fe-2S]-[ferredoxin] + 2 S-adenosyl-L-methionine + 4 H(+) = [[Fe-S] cluster scaffold protein] + N(6)-[(R)-dihydrolipoyl]-L-lysyl-[protein] + 4 Fe(3+) + 2 hydrogen sulfide + 2 5'-deoxyadenosine + 2 L-methionine + 2 reduced [2Fe-2S]-[ferredoxin]. It functions in the pathway protein modification; protein lipoylation via endogenous pathway; protein N(6)-(lipoyl)lysine from octanoyl-[acyl-carrier-protein]: step 2/2. Functionally, catalyzes the radical-mediated insertion of two sulfur atoms into the C-6 and C-8 positions of the octanoyl moiety bound to the lipoyl domains of lipoate-dependent enzymes, thereby converting the octanoylated domains into lipoylated derivatives. This Caldicellulosiruptor bescii (strain ATCC BAA-1888 / DSM 6725 / KCTC 15123 / Z-1320) (Anaerocellum thermophilum) protein is Lipoyl synthase.